A 143-amino-acid chain; its full sequence is Antitumor antibiotic C-1027 apoprotein (143 aa).

Positions 1–33 are cleaved as a signal peptide; sequence MSLRHMSRRASRFGVVAVASIGLAAAAQSVAFA. 2 disulfides stabilise this stretch: C69-C78 and C119-C124.

It belongs to the neocarzinostatin family.

Functionally, binds non-covalently to a chromophore which is the cytotoxic and mutagenic component of the antibiotic. The chromophore binds to DNA as a weak intercalator and causes single- and double-strand breaks. This is Antitumor antibiotic C-1027 apoprotein (cagA) from Streptomyces globisporus.